The sequence spans 98 residues: NADH-ubiquinone oxidoreductase chain 4L (98 aa).

The next 3 helical transmembrane spans lie at 1 to 21 (MPVIYINLIAAFFMAFMGLLI), 29 to 49 (SLLCLEGMMLSLFILNSTLAL), and 61 to 81 (IILLVFAACEAALGLSLLVMV).

The protein belongs to the complex I subunit 4L family. In terms of assembly, core subunit of respiratory chain NADH dehydrogenase (Complex I) which is composed of 45 different subunits.

It localises to the mitochondrion inner membrane. It catalyses the reaction a ubiquinone + NADH + 5 H(+)(in) = a ubiquinol + NAD(+) + 4 H(+)(out). In terms of biological role, core subunit of the mitochondrial membrane respiratory chain NADH dehydrogenase (Complex I) which catalyzes electron transfer from NADH through the respiratory chain, using ubiquinone as an electron acceptor. Part of the enzyme membrane arm which is embedded in the lipid bilayer and involved in proton translocation. This is NADH-ubiquinone oxidoreductase chain 4L (MT-ND4L) from Echinops telfairi (Lesser hedgehog tenrec).